Here is a 205-residue protein sequence, read N- to C-terminus: Protein-L-isoaspartate O-methyltransferase (205 aa).

Residue serine 56 is part of the active site.

This sequence belongs to the methyltransferase superfamily. L-isoaspartyl/D-aspartyl protein methyltransferase family.

It is found in the cytoplasm. The catalysed reaction is [protein]-L-isoaspartate + S-adenosyl-L-methionine = [protein]-L-isoaspartate alpha-methyl ester + S-adenosyl-L-homocysteine. Functionally, catalyzes the methyl esterification of L-isoaspartyl residues in peptides and proteins that result from spontaneous decomposition of normal L-aspartyl and L-asparaginyl residues. It plays a role in the repair and/or degradation of damaged proteins. The polypeptide is Protein-L-isoaspartate O-methyltransferase (Aeromonas hydrophila subsp. hydrophila (strain ATCC 7966 / DSM 30187 / BCRC 13018 / CCUG 14551 / JCM 1027 / KCTC 2358 / NCIMB 9240 / NCTC 8049)).